We begin with the raw amino-acid sequence, 374 residues long: DNA replication and repair protein RecF (374 aa).

ATP is bound at residue 30-37; the sequence is GHNAQGKT.

Belongs to the RecF family.

The protein localises to the cytoplasm. In terms of biological role, the RecF protein is involved in DNA metabolism; it is required for DNA replication and normal SOS inducibility. RecF binds preferentially to single-stranded, linear DNA. It also seems to bind ATP. The sequence is that of DNA replication and repair protein RecF from Limosilactobacillus reuteri (strain DSM 20016) (Lactobacillus reuteri).